A 193-amino-acid chain; its full sequence is Threonylcarbamoyl-AMP synthase (193 aa).

In terms of domain architecture, YrdC-like spans 14 to 193 (SRLQQRARKQ…IDLESGRVLR (180 aa)).

The protein belongs to the SUA5 family. TsaC subfamily.

Its subcellular location is the cytoplasm. It catalyses the reaction L-threonine + hydrogencarbonate + ATP = L-threonylcarbamoyladenylate + diphosphate + H2O. In terms of biological role, required for the formation of a threonylcarbamoyl group on adenosine at position 37 (t(6)A37) in tRNAs that read codons beginning with adenine. Catalyzes the conversion of L-threonine, HCO(3)(-)/CO(2) and ATP to give threonylcarbamoyl-AMP (TC-AMP) as the acyladenylate intermediate, with the release of diphosphate. In Chromobacterium violaceum (strain ATCC 12472 / DSM 30191 / JCM 1249 / CCUG 213 / NBRC 12614 / NCIMB 9131 / NCTC 9757 / MK), this protein is Threonylcarbamoyl-AMP synthase.